A 194-amino-acid chain; its full sequence is Cysteine and glycine-rich protein 3 (194 aa).

An interaction with TCAP region spans residues 1–5 (MPNWG). Residues 10-61 (CGACEKTVYHAEEIQCNGRSFHKTCFHCMACRKALDSTTVAAHESEIYCKVC) form the LIM zinc-binding 1 domain. Residues 64–69 (RRYGPK) carry the Nuclear localization signal motif. The interaction with CLF2 stretch occupies residues 94-106 (QSPKQARSATTSS). Residues S95 and S153 each carry the phosphoserine modification. The LIM zinc-binding 2 domain occupies 120 to 171 (CPRCGKSVYAAEKVMGGGKPWHKTCFRCAICGKSLESTNVTDKDGELYCKVC).

As to quaternary structure, self-associates. Oligomeric in the cytoplasm and monomeric in the nucleus. Homooligomers preferentially form along the actin cytoskeleton. Interacts with TCAP, LDHD, MYOD1, MYOG, ACTN2, NRAP, MYF6. Interacts (via N-terminus) with GLRX3 (via C-terminus) and PPP3CA; GLRX3 and calcineurin compete for interaction with CSRP3. Interacts with CFL2; the stoichiometry influences F-actin depolymerization and possibly two molecules of CFL2 can interact with one molecule of CSRP3 resulting in the highest functional impact; the interaction is stronger with phosphorylated CFL2.

Its subcellular location is the nucleus. The protein localises to the cytoplasm. It is found in the cytoskeleton. The protein resides in the myofibril. It localises to the sarcomere. Its subcellular location is the z line. Functionally, positive regulator of myogenesis. Acts as a cofactor for myogenic bHLH transcription factors such as MYOD1, and probably MYOG and MYF6. Enhances the DNA-binding activity of the MYOD1:TCF3 isoform E47 complex and may promote formation of a functional MYOD1:TCF3 isoform E47:MEF2A complex involved in myogenesis. Plays a crucial and specific role in the organization of cytosolic structures in cardiomyocytes. Could play a role in mechanical stretch sensing. May be a scaffold protein that promotes the assembly of interacting proteins at Z-line structures. It is essential for calcineurin anchorage to the Z line. Required for stress-induced calcineurin-NFAT activation. The role in regulation of cytoskeleton dynamics by association with CFL2 is reported conflictingly. Proposed to contribute to the maintenance of muscle cell integrity through an actin-based mechanism. Can directly bind to actin filaments, cross-link actin filaments into bundles without polarity selectivity and protect them from dilution- and cofilin-mediated depolymerization; the function seems to involve its self-association. In vitro can inhibit PKC/PRKCA activity. Proposed to be involved in cardiac stress signaling by down-regulating excessive PKC/PRKCA signaling. The protein is Cysteine and glycine-rich protein 3 (CSRP3) of Bos taurus (Bovine).